Here is a 297-residue protein sequence, read N- to C-terminus: Light-independent protochlorophyllide reductase iron-sulfur ATP-binding protein (297 aa).

ATP is bound by residues 41–46 and lysine 70; that span reads GIGKST. Mg(2+) is bound at residue serine 45. Residues cysteine 126 and cysteine 160 each contribute to the [4Fe-4S] cluster site. Residues 211-212 and 235-237 each bind ATP; these read NR and PDL.

It belongs to the NifH/BchL/ChlL family. As to quaternary structure, homodimer. Protochlorophyllide reductase is composed of three subunits; BchL, BchN and BchB. Requires [4Fe-4S] cluster as cofactor.

It catalyses the reaction chlorophyllide a + oxidized 2[4Fe-4S]-[ferredoxin] + 2 ADP + 2 phosphate = protochlorophyllide a + reduced 2[4Fe-4S]-[ferredoxin] + 2 ATP + 2 H2O. It functions in the pathway porphyrin-containing compound metabolism; bacteriochlorophyll biosynthesis (light-independent). Functionally, component of the dark-operative protochlorophyllide reductase (DPOR) that uses Mg-ATP and reduced ferredoxin to reduce ring D of protochlorophyllide (Pchlide) to form chlorophyllide a (Chlide). This reaction is light-independent. The L component serves as a unique electron donor to the NB-component of the complex, and binds Mg-ATP. The sequence is that of Light-independent protochlorophyllide reductase iron-sulfur ATP-binding protein from Cereibacter sphaeroides (strain KD131 / KCTC 12085) (Rhodobacter sphaeroides).